Reading from the N-terminus, the 671-residue chain is DNA ligase (671 aa).

NAD(+) is bound by residues D36–D40, S85–M86, and E115. Residue K117 is the N6-AMP-lysine intermediate of the active site. Residues R138, E172, K287, and K311 each coordinate NAD(+). C405, C408, C423, and C428 together coordinate Zn(2+). A BRCT domain is found at A588–K671.

It belongs to the NAD-dependent DNA ligase family. LigA subfamily. Mg(2+) serves as cofactor. The cofactor is Mn(2+).

The enzyme catalyses NAD(+) + (deoxyribonucleotide)n-3'-hydroxyl + 5'-phospho-(deoxyribonucleotide)m = (deoxyribonucleotide)n+m + AMP + beta-nicotinamide D-nucleotide.. In terms of biological role, DNA ligase that catalyzes the formation of phosphodiester linkages between 5'-phosphoryl and 3'-hydroxyl groups in double-stranded DNA using NAD as a coenzyme and as the energy source for the reaction. It is essential for DNA replication and repair of damaged DNA. This chain is DNA ligase, found in Lactobacillus delbrueckii subsp. bulgaricus (strain ATCC 11842 / DSM 20081 / BCRC 10696 / JCM 1002 / NBRC 13953 / NCIMB 11778 / NCTC 12712 / WDCM 00102 / Lb 14).